A 116-amino-acid chain; its full sequence is Probable prefoldin subunit 2 (116 aa).

It belongs to the prefoldin subunit beta family. Heterohexamer of two PFD-alpha type and four PFD-beta type subunits.

Functionally, binds specifically to cytosolic chaperonin (c-CPN) and transfers target proteins to it. Binds to nascent polypeptide chain and promotes folding in an environment in which there are many competing pathways for nonnative proteins. In Dictyostelium discoideum (Social amoeba), this protein is Probable prefoldin subunit 2 (pfdn2).